Consider the following 674-residue polypeptide: Multifunctional alkene reductase/demethylase OYE (674 aa).

FMN is bound by residues Gly-62 and Gln-105. The active-site Proton donor is the His-175. FMN is bound by residues Arg-223 and Lys-299. [4Fe-4S] cluster contacts are provided by Cys-345, Cys-351, and Cys-358. Residues Ala-391, Gln-418, and Arg-428 each coordinate FAD.

The protein in the N-terminal section; belongs to the NADH:flavin oxidoreductase/NADH oxidase family. It depends on [4Fe-4S] cluster as a cofactor. Requires FAD as cofactor. The cofactor is FMN.

The enzyme catalyses 3-phenylpropanoate + NAD(+) = (E)-cinnamate + NADH + H(+). The catalysed reaction is N-methyl-L-proline + NAD(+) + H2O = L-proline + formaldehyde + NADH + H(+). Functionally, a member of the 2-enoate reductase subfamily of old yellow enzymes (OYE) able to reduce alpha/beta alkenes near electron-withdrawing groups as well as perform oxidative demethylation chemistry. Prefers NADH over NADPH as cosubstrate. May play a role in osmotic stress response in situ. This is Multifunctional alkene reductase/demethylase OYE from Caballeronia cordobensis (Burkholderia cordobensis).